Consider the following 496-residue polypeptide: Protein RepR (496 aa).

Residues 120–141 mediate DNA binding; sequence SDILTTAIDLGFMPTLIIKSDK.

Essential for replication. In Streptococcus agalactiae, this protein is Protein RepR (repR).